The sequence spans 140 residues: L-fucose mutarotase (140 aa).

His-22 functions as the Proton donor in the catalytic mechanism. Substrate is bound by residues Asp-30, Arg-107, and 129 to 131 (YGN).

It belongs to the RbsD / FucU family. FucU mutarotase subfamily. As to quaternary structure, homodecamer.

Its subcellular location is the cytoplasm. It carries out the reaction alpha-L-fucose = beta-L-fucose. It functions in the pathway carbohydrate metabolism; L-fucose metabolism. In terms of biological role, involved in the anomeric conversion of L-fucose. This Klebsiella pneumoniae subsp. pneumoniae (strain ATCC 700721 / MGH 78578) protein is L-fucose mutarotase.